Here is a 556-residue protein sequence, read N- to C-terminus: Sesquiterpene synthase 2 (556 aa).

Mg(2+)-binding residues include Asp309, Asp313, Asp453, and Glu461. Residues 309–313 (DDIYD) carry the DDXXD motif motif.

The protein belongs to the terpene synthase family. Tpsa subfamily. Mg(2+) serves as cofactor. Requires Mn(2+) as cofactor. As to expression, mostly expressed in roots and mature leaflets and, to a lower extent, in rachis and developing leaflets.

The enzyme catalyses (2E,6E)-farnesyl diphosphate = alpha-humulene + diphosphate. It catalyses the reaction (2E,6E)-farnesyl diphosphate = alpha-selinene + diphosphate. It carries out the reaction (2E,6E)-farnesyl diphosphate = delta-cadinene + diphosphate. The catalysed reaction is (2E,6E)-farnesyl diphosphate = (1S,2S,4R)-beta-elemene + diphosphate. Its pathway is secondary metabolite biosynthesis; terpenoid biosynthesis. Functionally, sesquiterpene synthase involved in the biosynthesis of volatile compounds known for their medicinal efficacy for treating enteritis, dysentery, itch and some cancers. Mediates the conversion of (2E,6E)-farnesyl diphosphate (FPP) into beta-elemene, alpha-humulene, delta-cadinene and alpha-selinene. The sequence is that of Sesquiterpene synthase 2 from Toona sinensis (Chinese mahogany).